The primary structure comprises 872 residues: Metabotropic glutamate receptor 2 (872 aa).

An N-terminal signal peptide occupies residues 1–18; sequence MGSLLALLALLLLWGAVA. The Extracellular portion of the chain corresponds to 19 to 567; it reads EGPAKKVLTL…QEYIRWGDAW (549 aa). Cys50 and Cys92 are disulfide-bonded. Positions 57, 61, 145, 166, and 168 each coordinate L-glutamate. Asn203 and Asn286 each carry an N-linked (GlcNAc...) asparagine glycan. 7 cysteine pairs are disulfide-bonded: Cys234–Cys518, Cys355–Cys362, Cys400–Cys407, Cys500–Cys519, Cys504–Cys522, Cys525–Cys537, and Cys540–Cys553. L-glutamate is bound at residue Asp295. Asn338 is a glycosylation site (N-linked (GlcNAc...) asparagine). Lys377 provides a ligand contact to L-glutamate. Asn402 is a glycosylation site (N-linked (GlcNAc...) asparagine). Asn547 carries N-linked (GlcNAc...) asparagine glycosylation. A helical transmembrane segment spans residues 568-590; that stretch reads AVGPVTIACLGALATLFVLGVFV. Topologically, residues 591 to 604 are cytoplasmic; the sequence is RHNATPVVKASGRE. The chain crosses the membrane as a helical span at residues 605–625; that stretch reads LCYILLGGVFLCYCMTFIFIA. Residues 626 to 636 are Extracellular-facing; the sequence is KPSTAVCTLRR. An intrachain disulfide couples Cys632 to Cys721. Residues 637-655 traverse the membrane as a helical segment; the sequence is LGLGTAFSVCYSALLTKTN. The Cytoplasmic portion of the chain corresponds to 656–679; sequence RIARIFGGAREGAQRPRFISPASQ. An important for interaction with HTR2A region spans residues 677 to 685; sequence ASQVAICLA. The chain crosses the membrane as a helical span at residues 680–700; sequence VAICLALISGQLLIVVAWLVV. Residues 701 to 725 lie on the Extracellular side of the membrane; sequence EAPGTGKETAPERREVVTLRCNHRD. The helical transmembrane segment at 726–747 threads the bilayer; sequence ASMLGSLAYNVLLIALCTLYAF. Residues 748–760 lie on the Cytoplasmic side of the membrane; sequence KTRKCPENFNEAK. A helical membrane pass occupies residues 761-783; sequence FIGFTMYTTCIIWLAFLPIFYVT. Residues 784–793 lie on the Extracellular side of the membrane; the sequence is SSDYRVQTTT. The helical transmembrane segment at 794-819 threads the bilayer; that stretch reads MCVSVSLSGSVVLGCLFAPKLHIILF. At 820–872 the chain is on the cytoplasmic side; that stretch reads QPQKNVVSHRAPTSRFGSAAARASSSLGQGSGSQFVPTVCNGREVVDSTTSSL.

It belongs to the G-protein coupled receptor 3 family. Forms heterodimers with GRM3 or GRM4. Interacts with TAMALIN. Interacts with HTR2A. In terms of assembly, (Microbial infection) Interacts with H5N6 virus protein HA. As to quaternary structure, (Microbial infection) Interacts with rabies virus protein G. (Microbial infection) Interacts with SARS-CoV-2 virus spike protein S. In terms of tissue distribution, detected in brain cortex (at protein level). Widely expressed in different regions of the adult brain as well as in fetal brain.

It is found in the cell membrane. It localises to the synapse. The protein resides in the cell projection. The protein localises to the dendrite. Dimeric G protein-coupled receptor which is activated by the excitatory neurotransmitter L-glutamate. Plays critical roles in modulating synaptic transmission and neuronal excitability. Upon activation by glutamate, inhibits presynaptic calcium channels, reducing further glutamate release and dampening excitatory signaling. Mechanistically, ligand binding causes a conformation change that triggers signaling via guanine nucleotide-binding proteins (G proteins) and modulates the activity of down-stream effectors, such as adenylate cyclase. May mediate suppression of neurotransmission or may be involved in synaptogenesis or synaptic stabilization. In terms of biological role, (Microbial infection) Plays an important role in influenza virus internalization. Functionally, (Microbial infection) Acts as a host entry factor for rabies virus that hijacks the endocytosis of GRM2 to enter cells. Its function is as follows. (Microbial infection) Acts as a host entry factor for SARS-CoV-2 that hijacks the endocytosis of GRM2 to enter cells. The chain is Metabotropic glutamate receptor 2 from Homo sapiens (Human).